The chain runs to 377 residues: Nitric oxide reductase FlRd-NAD(+) reductase (377 aa).

This sequence belongs to the FAD-dependent oxidoreductase family. FAD is required as a cofactor.

The protein resides in the cytoplasm. The catalysed reaction is 2 reduced [nitric oxide reductase rubredoxin domain] + NAD(+) + H(+) = 2 oxidized [nitric oxide reductase rubredoxin domain] + NADH. The protein operates within nitrogen metabolism; nitric oxide reduction. In terms of biological role, one of at least two accessory proteins for anaerobic nitric oxide (NO) reductase. Reduces the rubredoxin moiety of NO reductase. The chain is Nitric oxide reductase FlRd-NAD(+) reductase from Enterobacter sp. (strain 638).